The primary structure comprises 200 residues: Holliday junction branch migration complex subunit RuvA (200 aa).

Residues 1-63 form a domain I region; the sequence is MIALLTGQIA…EDAILLYGFR (63 aa). Positions 64–142 are domain II; it reads TRTEKSFFQL…KLDSGSIPAG (79 aa). A flexible linker region spans residues 143-153; the sequence is DAVGRSLPAGS. Positions 153-200 are domain III; sequence SVLDDVSSALVNLGYKDPQVRKVLAELDCAGSASVEEVLKQALKILMK.

It belongs to the RuvA family. As to quaternary structure, homotetramer. Forms an RuvA(8)-RuvB(12)-Holliday junction (HJ) complex. HJ DNA is sandwiched between 2 RuvA tetramers; dsDNA enters through RuvA and exits via RuvB. An RuvB hexamer assembles on each DNA strand where it exits the tetramer. Each RuvB hexamer is contacted by two RuvA subunits (via domain III) on 2 adjacent RuvB subunits; this complex drives branch migration. In the full resolvosome a probable DNA-RuvA(4)-RuvB(12)-RuvC(2) complex forms which resolves the HJ.

The protein localises to the cytoplasm. The RuvA-RuvB-RuvC complex processes Holliday junction (HJ) DNA during genetic recombination and DNA repair, while the RuvA-RuvB complex plays an important role in the rescue of blocked DNA replication forks via replication fork reversal (RFR). RuvA specifically binds to HJ cruciform DNA, conferring on it an open structure. The RuvB hexamer acts as an ATP-dependent pump, pulling dsDNA into and through the RuvAB complex. HJ branch migration allows RuvC to scan DNA until it finds its consensus sequence, where it cleaves and resolves the cruciform DNA. The chain is Holliday junction branch migration complex subunit RuvA from Trichlorobacter lovleyi (strain ATCC BAA-1151 / DSM 17278 / SZ) (Geobacter lovleyi).